The sequence spans 579 residues: uncharacterized protein (579 aa).

Positions 449–577 (QKGVFILVDI…GKNRLMIHDS (129 aa)) constitute a GGDEF domain.

This is an uncharacterized protein from Bacillus subtilis (strain 168).